The sequence spans 330 residues: Probable L-asparaginase (330 aa).

Residues 6–330 enclose the Asparaginase/glutaminase domain; it reads PTIALLATGG…EKIQEMFEEY (325 aa). Catalysis depends on Thr16, which acts as the O-isoaspartyl threonine intermediate. Substrate is bound by residues Ser62 and 95–96; that span reads TD.

It belongs to the asparaginase 1 family.

It is found in the cytoplasm. The enzyme catalyses L-asparagine + H2O = L-aspartate + NH4(+). This is Probable L-asparaginase (ansA) from Helicobacter pylori (strain ATCC 700392 / 26695) (Campylobacter pylori).